The following is a 446-amino-acid chain: MAHVITRINAREILDSRGNPTVEVDLETNLGIFRAAVPSGASTGIYEALELRDNDKSRYLGKGVQKAIKNINEIIAPKLIGMNCTEQKKIDNLMVEELDGSKNEWGWSKSKLGANAILAISMAVCRAGAAANKVSLYKYLAQLAGKKSDQMVLPVPCLNVINGGSHAGNKLSFQEFMIVPVGAPSFKEALRYGAEVYHTLKSEIKKKYGIDATNVGDEGGFAPNILNANEALDLLVTAIKSAGYEGKVKIAMDVAASEFYNSENKTYDLDFKTPNNDKSLVKTGAQLVDLYIDLVKKYPIVSIEDPFDQDDWENYAKLTAAIGKDVQIVGDDLLVTNPTRITKALEKNACNALLLKVNQIGSITEAIEACLLSQKNNWGVMVSHRSGETEDVFIADLVVALRTGQIKTGAPCRSERNAKYNQLLRIEESLGNNAVFAGEKFRLQLN.

A Mg(2+)-binding site is contributed by serine 42. Serine 42 bears the Phosphoserine mark. The short motif at 104–108 is the Pentapeptide insert element; it reads EWGWS. Lysine 133 carries the post-translational modification N6-acetyllysine. Lysine 138 participates in a covalent cross-link: Glycyl lysine isopeptide (Lys-Gly) (interchain with G-Cter in ubiquitin). A Phosphotyrosine modification is found at tyrosine 139. Residues histidine 166 and glutamate 175 each contribute to the substrate site. Glutamate 218 (proton donor) is an active-site residue. Residue aspartate 253 coordinates Mg(2+). A DKSLVK motif motif is present at residues 277–282; it reads DKSLVK. Residues glutamate 304 and aspartate 331 each contribute to the Mg(2+) site. Substrate contacts are provided by glutamate 304 and aspartate 331. Threonine 339 is modified (phosphothreonine). Residue lysine 356 is the Proton acceptor of the active site. Lysine 375 bears the N6-acetyllysine mark. Residues 383–386 and lysine 407 contribute to the substrate site; that span reads SHRS.

The protein belongs to the enolase family. Homodimer. Forms a complex at least composed of DegP, ENO and HSP70. Interacts with G-actin. Interacts (via the DKSLVK motif) with mammalian host PLG/plasminogen (present in the mosquito blood meal); the interaction occurs at the ookinete cell surface and is required for ookinete invasion of the mosquito midgut. Interacts with A.gambiae EBP; depending on the Plasmodium species, the interaction is either involved in ookinete invasion of the mosquito midgut (P.berghei) or is dispensable (P.falciparum). Mg(2+) is required as a cofactor.

The protein localises to the cytoplasm. It localises to the nucleus. Its subcellular location is the cytoskeleton. The protein resides in the cell surface. It is found in the cell membrane. The protein localises to the vacuole. The catalysed reaction is (2R)-2-phosphoglycerate = phosphoenolpyruvate + H2O. It functions in the pathway carbohydrate degradation; glycolysis; pyruvate from D-glyceraldehyde 3-phosphate: step 4/5. Its function is as follows. Glycolytic enzyme that catalyzes the conversion of 2-phosphoglycerate to phosphoenolpyruvate. In addition to glycolysis, involved in various processes such as parasite development and invasion. Plays an essential role during ookinete invasion of the mosquito vector midgut by mediating the interaction of the ookinete with the midgut epithelium and, further, by binding to mammalian host plasminogen in the blood meal, whose conversion to active plasmin promotes the invasion process. This Plasmodium falciparum (isolate 3D7) protein is Enolase.